The sequence spans 179 residues: Ribosome maturation factor RimM (179 aa).

Residues 102 to 173 (PEEYHYRDLI…ALHVQPPPGL (72 aa)) enclose the PRC barrel domain.

This sequence belongs to the RimM family. As to quaternary structure, binds ribosomal protein uS19.

It is found in the cytoplasm. In terms of biological role, an accessory protein needed during the final step in the assembly of 30S ribosomal subunit, possibly for assembly of the head region. Essential for efficient processing of 16S rRNA. May be needed both before and after RbfA during the maturation of 16S rRNA. It has affinity for free ribosomal 30S subunits but not for 70S ribosomes. This Synechococcus sp. (strain JA-2-3B'a(2-13)) (Cyanobacteria bacterium Yellowstone B-Prime) protein is Ribosome maturation factor RimM.